The following is a 364-amino-acid chain: Methylthioribose-1-phosphate isomerase (364 aa).

Residues 46–48 (RGA), Arg-89, and Gln-196 contribute to the substrate site. The active-site Proton donor is the Asp-237. Residue 247 to 248 (NK) coordinates substrate.

The protein belongs to the eIF-2B alpha/beta/delta subunits family. MtnA subfamily.

It catalyses the reaction 5-(methylsulfanyl)-alpha-D-ribose 1-phosphate = 5-(methylsulfanyl)-D-ribulose 1-phosphate. Its pathway is amino-acid biosynthesis; L-methionine biosynthesis via salvage pathway; L-methionine from S-methyl-5-thio-alpha-D-ribose 1-phosphate: step 1/6. Its function is as follows. Catalyzes the interconversion of methylthioribose-1-phosphate (MTR-1-P) into methylthioribulose-1-phosphate (MTRu-1-P). The protein is Methylthioribose-1-phosphate isomerase of Pelotomaculum thermopropionicum (strain DSM 13744 / JCM 10971 / SI).